The sequence spans 1016 residues: UvrABC system protein A (1016 aa).

32 to 39 serves as a coordination point for ATP; that stretch reads GVSGSGKS. The segment at 259–286 adopts a C4-type zinc-finger fold; it reads CPEHGSVLEELEPRSFSFNSPYGACGDC. ABC transporter domains lie at 315 to 627 and 647 to 975; these read WTKK…KNSL and GNGK…EYLR. ATP is bound at residue 679–686; the sequence is GPSGSGKS. Residues 778-804 form a C4-type zinc finger; it reads CEHCKGDGVMKIEMNFLPDIYVPCEVC. Residues 984-1016 are disordered; sequence EPRARGEKAEKPAKAKAPAKKRTKKQTELVEAD. A compositionally biased stretch (basic and acidic residues) spans 985–996; sequence PRARGEKAEKPA.

This sequence belongs to the ABC transporter superfamily. UvrA family. As to quaternary structure, forms a heterotetramer with UvrB during the search for lesions.

It is found in the cytoplasm. Functionally, the UvrABC repair system catalyzes the recognition and processing of DNA lesions. UvrA is an ATPase and a DNA-binding protein. A damage recognition complex composed of 2 UvrA and 2 UvrB subunits scans DNA for abnormalities. When the presence of a lesion has been verified by UvrB, the UvrA molecules dissociate. This is UvrABC system protein A from Deinococcus radiodurans (strain ATCC 13939 / DSM 20539 / JCM 16871 / CCUG 27074 / LMG 4051 / NBRC 15346 / NCIMB 9279 / VKM B-1422 / R1).